Consider the following 297-residue polypeptide: N-acetylmuramic acid 6-phosphate etherase (297 aa).

The 164-residue stretch at 55-218 (AAAALTRGGR…STGAMVKCGK (164 aa)) folds into the SIS domain. The Proton donor role is filled by Glu83. Glu114 is a catalytic residue.

The protein belongs to the GCKR-like family. MurNAc-6-P etherase subfamily. In terms of assembly, homodimer.

It carries out the reaction N-acetyl-D-muramate 6-phosphate + H2O = N-acetyl-D-glucosamine 6-phosphate + (R)-lactate. The protein operates within amino-sugar metabolism; 1,6-anhydro-N-acetylmuramate degradation. It participates in amino-sugar metabolism; N-acetylmuramate degradation. Its pathway is cell wall biogenesis; peptidoglycan recycling. Its function is as follows. Specifically catalyzes the cleavage of the D-lactyl ether substituent of MurNAc 6-phosphate, producing GlcNAc 6-phosphate and D-lactate. Together with AnmK, is also required for the utilization of anhydro-N-acetylmuramic acid (anhMurNAc) either imported from the medium or derived from its own cell wall murein, and thus plays a role in cell wall recycling. This Cronobacter sakazakii (strain ATCC BAA-894) (Enterobacter sakazakii) protein is N-acetylmuramic acid 6-phosphate etherase.